We begin with the raw amino-acid sequence, 67 residues long: Protein AaeX (67 aa).

Helical transmembrane passes span 3 to 23 (LFPVIVIFGLSFPPIFFELLL) and 43 to 63 (FVWHPALFNTALYCCLFYLLS).

The protein belongs to the AaeX family.

It localises to the cell membrane. The protein is Protein AaeX of Cronobacter sakazakii (strain ATCC BAA-894) (Enterobacter sakazakii).